Reading from the N-terminus, the 513-residue chain is Zinc finger CCCH-type with G patch domain-containing protein (513 aa).

Residues 155 to 178 form a C3H1-type zinc finger; that stretch reads PCSYYLEGECRFDEAKCRFSHGAL. Positions 252–261 are enriched in acidic residues; that stretch reads DQDEDDELSS. Residues 252 to 283 are disordered; that stretch reads DQDEDDELSSEESNSSMNDNSSDEAESDMDDL. Positions 262-271 are enriched in low complexity; the sequence is EESNSSMNDN. Positions 272 to 283 are enriched in acidic residues; that stretch reads SSDEAESDMDDL. Residues 312–358 enclose the G-patch domain; the sequence is TRGIGSKLMEKMGYIHGTGLGSDGRGIVTPVSAQILPQGRSLDACME. The span at 478 to 495 shows a compositional bias: polar residues; it reads VQMQSHKQELATLQAQER. The interval 478-513 is disordered; that stretch reads VQMQSHKQELATLQAQERSLSKEQQTRKSKNKMFEF. Positions 496 to 513 are enriched in basic and acidic residues; sequence SLSKEQQTRKSKNKMFEF.

It localises to the nucleus. In terms of biological role, transcription repressor. In Drosophila melanogaster (Fruit fly), this protein is Zinc finger CCCH-type with G patch domain-containing protein.